Consider the following 183-residue polypeptide: UPF0200 protein MMP1282 (183 aa).

8–15 is an ATP binding site; sequence GMPGSGKS.

The protein belongs to the UPF0200 family.

The protein is UPF0200 protein MMP1282 of Methanococcus maripaludis (strain DSM 14266 / JCM 13030 / NBRC 101832 / S2 / LL).